The primary structure comprises 359 residues: MQIIADLLNTIPAINSAAMSRAQRHVDGLFKPVGSLGKLEALAIQLAGMPGVNGIPHVGKKAVLVMCADHGVWEEGVAISPKEVTAIQAENMTRGTTGVCVLAAQAGANVHVIDVGIDTAEPIPGLINMRVARGSGNIASAPAMSRRQAEKLLLDVICYTRELAKNGVTLFGVGELGMANTTPAAAIVSTITGRDPEEVVGIGANLPTDKLANKIDVVRRAITLNQPNPQDGVDVLAKVGGFDLVGIAGVMLGAASCGLPVLLDGFLSYAAALAACQMSPAIKPYLIPSHLSAEKGARIALSHLGLEPYLNRDMRIGEGIVQALAMSIIEAACAIYNNMGELAASNIVLPGNTTSDLNS.

Catalysis depends on glutamate 318, which acts as the Proton acceptor.

Belongs to the CobT family. Homodimer.

The catalysed reaction is 5,6-dimethylbenzimidazole + nicotinate beta-D-ribonucleotide = alpha-ribazole 5'-phosphate + nicotinate + H(+). It participates in nucleoside biosynthesis; alpha-ribazole biosynthesis; alpha-ribazole from 5,6-dimethylbenzimidazole: step 1/2. Functionally, catalyzes the synthesis of alpha-ribazole-5'-phosphate from nicotinate mononucleotide (NAMN) and 5,6-dimethylbenzimidazole (DMB). This Shigella flexneri serotype 5b (strain 8401) protein is Nicotinate-nucleotide--dimethylbenzimidazole phosphoribosyltransferase.